A 237-amino-acid polypeptide reads, in one-letter code: 1-(5-phosphoribosyl)-5-[(5-phosphoribosylamino)methylideneamino] imidazole-4-carboxamide isomerase (237 aa).

Asp-8 serves as the catalytic Proton acceptor. Asp-129 acts as the Proton donor in catalysis.

Belongs to the HisA/HisF family.

It localises to the cytoplasm. It carries out the reaction 1-(5-phospho-beta-D-ribosyl)-5-[(5-phospho-beta-D-ribosylamino)methylideneamino]imidazole-4-carboxamide = 5-[(5-phospho-1-deoxy-D-ribulos-1-ylimino)methylamino]-1-(5-phospho-beta-D-ribosyl)imidazole-4-carboxamide. The protein operates within amino-acid biosynthesis; L-histidine biosynthesis; L-histidine from 5-phospho-alpha-D-ribose 1-diphosphate: step 4/9. This Roseiflexus sp. (strain RS-1) protein is 1-(5-phosphoribosyl)-5-[(5-phosphoribosylamino)methylideneamino] imidazole-4-carboxamide isomerase.